A 450-amino-acid chain; its full sequence is Tubulin alpha-5 chain (450 aa).

Positions 11, 71, 144, 145, 179, 206, and 228 each coordinate GTP. Glu-71 serves as a coordination point for Mg(2+). Glu-254 is a catalytic residue. Position 349 is a phosphothreonine (Thr-349). The tract at residues 429-450 is disordered; it reads EKDYEEVGAEGGDDEEDEGEDY. The span at 431 to 450 shows a compositional bias: acidic residues; sequence DYEEVGAEGGDDEEDEGEDY.

The protein belongs to the tubulin family. Dimer of alpha and beta chains. A typical microtubule is a hollow water-filled tube with an outer diameter of 25 nm and an inner diameter of 15 nM. Alpha-beta heterodimers associate head-to-tail to form protofilaments running lengthwise along the microtubule wall with the beta-tubulin subunit facing the microtubule plus end conferring a structural polarity. Microtubules usually have 13 protofilaments but different protofilament numbers can be found in some organisms and specialized cells. Mg(2+) is required as a cofactor. In terms of processing, undergoes a tyrosination/detyrosination cycle, the cyclic removal and re-addition of a C-terminal tyrosine residue by the enzymes tubulin tyrosine carboxypeptidase (TTCP) and tubulin tyrosine ligase (TTL), respectively.

The protein localises to the cytoplasm. It is found in the cytoskeleton. It catalyses the reaction GTP + H2O = GDP + phosphate + H(+). Functionally, tubulin is the major constituent of microtubules, a cylinder consisting of laterally associated linear protofilaments composed of alpha- and beta-tubulin heterodimers. Microtubules grow by the addition of GTP-tubulin dimers to the microtubule end, where a stabilizing cap forms. Below the cap, tubulin dimers are in GDP-bound state, owing to GTPase activity of alpha-tubulin. In Arabidopsis thaliana (Mouse-ear cress), this protein is Tubulin alpha-5 chain (TUBA5).